Reading from the N-terminus, the 591-residue chain is L-fucose isomerase (591 aa).

Active-site proton acceptor residues include glutamate 337 and aspartate 361. Residues glutamate 337, aspartate 361, and histidine 528 each contribute to the Mn(2+) site.

It belongs to the L-fucose isomerase family. As to quaternary structure, homohexamer. Mn(2+) serves as cofactor.

It localises to the cytoplasm. It carries out the reaction L-fucose = L-fuculose. The protein operates within carbohydrate degradation; L-fucose degradation; L-lactaldehyde and glycerone phosphate from L-fucose: step 1/3. Its function is as follows. Converts the aldose L-fucose into the corresponding ketose L-fuculose. This chain is L-fucose isomerase, found in Klebsiella pneumoniae (strain 342).